Consider the following 142-residue polypeptide: Hemoglobin subunit zeta (142 aa).

Ser-2 carries the N-acetylserine modification. Residues 2 to 142 (SLTRTERTII…VSGVLTEKYR (141 aa)) form the Globin domain. Thr-29 is subject to Phosphothreonine. Ser-53 is modified (phosphoserine). His-59 contacts heme b. A phosphoserine mark is found at Ser-73 and Ser-82. Heme b is bound at residue His-88.

This sequence belongs to the globin family. In terms of assembly, heterotetramer of two zeta chains and beta-type chains.

Functionally, the zeta chain is an alpha-type chain of mammalian embryonic hemoglobin. This is Hemoglobin subunit zeta (HBZ1) from Capra hircus (Goat).